A 204-amino-acid chain; its full sequence is Signal peptidase I (204 aa).

The Cytoplasmic segment spans residues 1 to 10 (MNSFKNFLKE). Residues 11–30 (WGLFLLILSLLALSRIFFWS) form a helical membrane-spanning segment. Topologically, residues 31-204 (NVRVEGHSMD…LWPITRIGTF (174 aa)) are extracellular. Residues Ser-38 and Lys-76 contribute to the active site.

It belongs to the peptidase S26 family.

Its subcellular location is the cell membrane. It catalyses the reaction Cleavage of hydrophobic, N-terminal signal or leader sequences from secreted and periplasmic proteins.. The chain is Signal peptidase I (lepB) from Streptococcus pneumoniae serotype 4 (strain ATCC BAA-334 / TIGR4).